Consider the following 276-residue polypeptide: NADPH-dependent 7-cyano-7-deazaguanine reductase (276 aa).

83–85 (VES) lines the substrate pocket. 85–86 (SK) contacts NADPH. The Thioimide intermediate role is filled by C184. Catalysis depends on D191, which acts as the Proton donor. 223–224 (HE) contributes to the substrate binding site. Residue 252–253 (RG) participates in NADPH binding.

This sequence belongs to the GTP cyclohydrolase I family. QueF type 2 subfamily. Homodimer.

Its subcellular location is the cytoplasm. It catalyses the reaction 7-aminomethyl-7-carbaguanine + 2 NADP(+) = 7-cyano-7-deazaguanine + 2 NADPH + 3 H(+). Its pathway is tRNA modification; tRNA-queuosine biosynthesis. Functionally, catalyzes the NADPH-dependent reduction of 7-cyano-7-deazaguanine (preQ0) to 7-aminomethyl-7-deazaguanine (preQ1). In Azotobacter vinelandii (strain DJ / ATCC BAA-1303), this protein is NADPH-dependent 7-cyano-7-deazaguanine reductase.